The sequence spans 573 residues: Sulfite reductase [NADPH] hemoprotein beta-component (573 aa).

Residues cysteine 438, cysteine 444, cysteine 483, and cysteine 487 each contribute to the [4Fe-4S] cluster site. Cysteine 487 contacts siroheme.

This sequence belongs to the nitrite and sulfite reductase 4Fe-4S domain family. Alpha(8)-beta(8). The alpha component is a flavoprotein, the beta component is a hemoprotein. It depends on siroheme as a cofactor. [4Fe-4S] cluster serves as cofactor.

The enzyme catalyses hydrogen sulfide + 3 NADP(+) + 3 H2O = sulfite + 3 NADPH + 4 H(+). The protein operates within sulfur metabolism; hydrogen sulfide biosynthesis; hydrogen sulfide from sulfite (NADPH route): step 1/1. Component of the sulfite reductase complex that catalyzes the 6-electron reduction of sulfite to sulfide. This is one of several activities required for the biosynthesis of L-cysteine from sulfate. In Shouchella clausii (strain KSM-K16) (Alkalihalobacillus clausii), this protein is Sulfite reductase [NADPH] hemoprotein beta-component.